Consider the following 384-residue polypeptide: 5-amino-6-(D-ribitylamino)uracil--L-tyrosine 4-hydroxyphenyl transferase 2 (384 aa).

The region spanning 53 to 286 (VSYVVNRNIY…IAISRVILHT (234 aa)) is the Radical SAM core domain. Residues C67, C71, and C74 each contribute to the [4Fe-4S] cluster site.

It belongs to the radical SAM superfamily. CofH family. As to quaternary structure, consists of two subunits, CofG and CofH. Requires [4Fe-4S] cluster as cofactor.

The catalysed reaction is 5-amino-6-(D-ribitylamino)uracil + L-tyrosine + S-adenosyl-L-methionine = 5-amino-5-(4-hydroxybenzyl)-6-(D-ribitylimino)-5,6-dihydrouracil + 2-iminoacetate + 5'-deoxyadenosine + L-methionine + H(+). Its pathway is cofactor biosynthesis; coenzyme F0 biosynthesis. Functionally, catalyzes the radical-mediated synthesis of 5-amino-5-(4-hydroxybenzyl)-6-(D-ribitylimino)-5,6-dihydrouracil from 5-amino-6-(D-ribitylamino)uracil and L-tyrosine. This Methanosarcina barkeri (strain Fusaro / DSM 804) protein is 5-amino-6-(D-ribitylamino)uracil--L-tyrosine 4-hydroxyphenyl transferase 2.